The chain runs to 218 residues: MSRHWPLFDLRITTPRLQLQLPTEELCDQLIDTILEGVHDPDRMPFSVPWTRASREDLPFNTLSHLWQQLAGFKRDDWSLPLAVLVDGRAVGVQALSSKDFPITRQVDSGSWLGLRYQGHGYGTEMRAAVLYFAFAELEAQVATSRSFVDNPASIAVSRRNGYRDNGLDRVAREGAMAEALLFRLTRDDWQRHRTVEVRVDGFDRCRPLFGPLEPPRY.

The N-acetyltransferase domain maps to 32-188; it reads DTILEGVHDP…EALLFRLTRD (157 aa). Substrate contacts are provided by residues Gln94, 109-113, 119-124, 145-151, and Arg160; these read SGSWL, GHGYGT, and SRSFVDN.

Dimer of dimers.

The catalysed reaction is L-lysyl-[protein] + acetyl-CoA = N(6)-acetyl-L-lysyl-[protein] + CoA + H(+). It carries out the reaction succinyl-CoA + L-lysyl-[protein] = N(6)-succinyl-L-lysyl-[protein] + CoA + H(+). Its function is as follows. Acetylates and succinylates nucleoid-associated, DNA-binding protein HupB. The chain is Acetyl- and succinyl-CoA transferase MT0822 from Mycobacterium tuberculosis (strain CDC 1551 / Oshkosh).